The chain runs to 194 residues: Potassium-transporting ATPase KdpC subunit (194 aa).

A helical membrane pass occupies residues 12–34 (LFLLLLTGGVYPLLTTALGQWWF).

The protein belongs to the KdpC family. As to quaternary structure, the system is composed of three essential subunits: KdpA, KdpB and KdpC.

The protein localises to the cell inner membrane. Its function is as follows. Part of the high-affinity ATP-driven potassium transport (or Kdp) system, which catalyzes the hydrolysis of ATP coupled with the electrogenic transport of potassium into the cytoplasm. This subunit acts as a catalytic chaperone that increases the ATP-binding affinity of the ATP-hydrolyzing subunit KdpB by the formation of a transient KdpB/KdpC/ATP ternary complex. The polypeptide is Potassium-transporting ATPase KdpC subunit (Salmonella agona (strain SL483)).